The primary structure comprises 558 residues: Nucleoprotein (558 aa).

A binding site for the cap structure m7GTP region spans residues 54–237; it reads MRKEKRDDKD…ITEQQSSINI (184 aa). Mg(2+) contacts are provided by Asp382 and Glu384. Residues Asp382 and Glu384 each contribute to the Mn(2+) site. Glu392, Cys499, His502, and Cys518 together coordinate Zn(2+). A Mg(2+)-binding site is contributed by Asp522. Asp522 contributes to the Mn(2+) binding site.

Belongs to the arenaviridae nucleocapsid protein family. Homomultimerizes to form the nucleocapsid. Binds to viral genomic RNA. Interacts with glycoprotein G2. Interacts with protein Z; this interaction probably directs the encapsidated genome to budding sites. Interacts with protein L; this interaction does not interfere with Z-L interaction. Interacts with host IKBKE (via Protein kinase domain); the interaction inhibits IKBKE kinase activity.

The protein resides in the virion. It is found in the host cytoplasm. In terms of biological role, encapsidates the genome, protecting it from nucleases. The encapsidated genomic RNA is termed the nucleocapsid (NC). Serves as template for viral transcription and replication. The increased presence of protein N in host cell does not seem to trigger the switch from transcription to replication as observed in other negative strain RNA viruses. Through the interaction with host IKBKE, strongly inhibits the phosphorylation and nuclear translocation of host IRF3, a protein involved in interferon activation pathway, leading to the inhibition of interferon-beta and IRF3-dependent promoters activation. Also encodes a functional 3'-5' exoribonuclease that degrades preferentially dsRNA substrates and thereby participates in the suppression of interferon induction. The chain is Nucleoprotein from Lymphocytic choriomeningitis virus (strain Armstrong) (LCMV).